Consider the following 583-residue polypeptide: Aspartate--tRNA ligase (583 aa).

Position 174 (E174) interacts with L-aspartate. The tract at residues 198–201 (QITK) is aspartate. R220 is a binding site for L-aspartate. ATP-binding positions include 220–222 (RDE) and Q229. An L-aspartate-binding site is contributed by H443. E477 provides a ligand contact to ATP. R484 is a binding site for L-aspartate. An ATP-binding site is contributed by 529–532 (GLDR).

The protein belongs to the class-II aminoacyl-tRNA synthetase family. Type 1 subfamily. Homodimer.

It localises to the cytoplasm. It catalyses the reaction tRNA(Asp) + L-aspartate + ATP = L-aspartyl-tRNA(Asp) + AMP + diphosphate. In terms of biological role, catalyzes the attachment of L-aspartate to tRNA(Asp) in a two-step reaction: L-aspartate is first activated by ATP to form Asp-AMP and then transferred to the acceptor end of tRNA(Asp). In Streptococcus agalactiae serotype Ia (strain ATCC 27591 / A909 / CDC SS700), this protein is Aspartate--tRNA ligase.